The sequence spans 1380 residues: MAQTLSFNGRRRVRKFFGKIPEVAEMPNLIEVQKASYDQFLMVDEPQGGRPDEGLQAVFKSVFPIKDFSGASMLEFVSYEFEAPKFDVEECRQRDLTYAAPLKVTLRLIVFDIDEDTGAKSIKDIKEQNVYMGDMPLMTDNGTFIVNGTERVIVSQMHRSPGVFFDHDKGKSHSSGKLLFAARVIPYRGSWLDIEFDAKDIVHARIDRRRKIPVTSLLMALGMDGEEILDTFYTKSLYQRDGEGWRVPFQPDALKGQKTLADMIDADTGEVVVESGKKLTPRLLRQLQEKGLKALKATDDDLYGNYLAEDVVNFETGEIYLEAGDEIDEKTLPVILSAGFDEIPVLDIDHINIGAYIRNTLSADKNENRQDALFDIYRVMRPGEPPTMDSAEAMFNALFFDAERYDLSAVGRVKMNMRLDLDVPDTVRTLRKEDILAVVKMLVELRDGKGEIDDIDNLGNRRVRSVGELMENQYRLGLLRMERAIKERMSSIEIDTVMPQDLINAKPAAAAVREFFGSSQLSQFMDQVNPLSEITHKRRLSALGPGGLTRERAGFEVRDVHPTHYGRICPIETPEGPNIGLINSLATFARVNKYGFIESPYRKIVDGKVTNDVVYLSAMEEAKYHVAQANSVLDDDGSFSEEFVVCRHAGEVMLAPRDNINLMDVSPKQLVSVAAALIPFLENDDANRALMGSNMQRQAVPLLRAEAPFVGTGMEPVVARDSGAAIAARRGGIVDQVDATRIVIRATEDLDPSKSGVDIYRLQKFQRSNQNTCVNQRPLVTVGDVINKGDIIADGPSTDLGDLALGRNALVAFMPWNGYNYEDSILLSERIVRDDVFTSIHIEEFEVMARDTKLGPEEITRDIPNVSEEALKNLDEAGIVYIGAEVQPGDILVGKITPKGESPMTPEEKLLRAIFGEKASDVRDTSMRMPPGTFGTVVEVRVFNRHGVEKDERAMAIEREEIERLAKDRDDEQAILDRNVYARLVDMLRGHVAVAGPKGFKKGTELSNVVISEYPRSQWWMFAIEDEKAQGEIEALRAQYDESKSRLEQRFMDKVEKVQRGDEMPPGVMKMVKVFVAVKRKIQPGDKMAGRHGNKGVVSRIVPIEDMPFLEDGTHVDVVLNPLGVPSRMNVGQILETHLGWACAGMGKKIGAMLDAYKAGADIQPLRDTIDSVIGSGPKGEPIKQYDDESIVRLAEQTRRGVSIATPVFDGAVEADVNEMLEQAGLKVTGQSTLYDGRTGETFDRQVTVGYIYMLKLNHLVDDKIHARSIGPYSLVTQQPLGGKAQFGGQRFGEMEVWALEAYGAAYTLQEMLTVKSDDVAGRTKVYEAIVRGDDTFEAGIPESFNVLVKEMRSLGLSVELENSKVDDVGSTAQLPDAAE.

The protein belongs to the RNA polymerase beta chain family. In terms of assembly, the RNAP catalytic core consists of 2 alpha, 1 beta, 1 beta' and 1 omega subunit. When a sigma factor is associated with the core the holoenzyme is formed, which can initiate transcription.

The catalysed reaction is RNA(n) + a ribonucleoside 5'-triphosphate = RNA(n+1) + diphosphate. In terms of biological role, DNA-dependent RNA polymerase catalyzes the transcription of DNA into RNA using the four ribonucleoside triphosphates as substrates. This is DNA-directed RNA polymerase subunit beta from Rhizobium meliloti (strain 1021) (Ensifer meliloti).